A 401-amino-acid polypeptide reads, in one-letter code: Methionyl-tRNA formyltransferase, mitochondrial (401 aa).

Residues 1-26 constitute a mitochondrion transit peptide; the sequence is MVKMRRITPTRLLFTCRYISNNASPP. (6R)-10-formyltetrahydrofolate-binding positions include 18 to 20 and 66 to 70; these read YIS and VVTRS.

Belongs to the Fmt family. Phosphorylated by GCN2 in response to nutrient deprivation. Phosphorylation mediates retention of FMT1 in the cytoplasm.

It is found in the mitochondrion. The protein localises to the mitochondrion matrix. The protein resides in the cytoplasm. It catalyses the reaction L-methionyl-tRNA(fMet) + (6R)-10-formyltetrahydrofolate = N-formyl-L-methionyl-tRNA(fMet) + (6S)-5,6,7,8-tetrahydrofolate + H(+). In terms of biological role, formylates methionyl-tRNA in mitochondria and the cytoplasm. Responsible for the formylation of the 8 N-terminally formylated (Nt-formylated) mitochondrial matrix proteins that are encoded by mitochondrial DNA. Nt-formylated proteins in the cytoplasm are strongly up-regulated in stationary phase or upon starvation for specific amino acids (His or Lys) and are targeted for degradation by a PSH1 E3 ubiquitin ligase-mediated fMet/N-end rule pathway. Increased Nt-formylation of cytosolic proteins appears to be important for adaptation to these stresses. Stationary phase-degraded Nt-formylated proteins include histone H3-like centromeric protein CSE4, Mediator complex subunit 3 (PGD1) and small ribosomal subunit protein uS8-A (RPS22A). This chain is Methionyl-tRNA formyltransferase, mitochondrial (FMT1), found in Saccharomyces cerevisiae (strain ATCC 204508 / S288c) (Baker's yeast).